We begin with the raw amino-acid sequence, 530 residues long: MATETLDEKTPEVNSPAKEEIDVVPKEEKEVEKEKVDSPRIGEAEEEKKEDEEEGEAKEGELGEKDKEDDVESEEEEEEEEGSGSKKSSEKETVTPTSERPTRERKKVERFSLSTPMRAPPSKSVSIEKGRGTPLREIPNVAHKLSKRKADDNLMLLHTILFGKKAKAQMVKRNIGQFSGFAWSEKEEEKQRARIKEKIDKCVKEKLIVFCDVLDIPISRSNVKKEELAVKVLEFLESPKETRDVIIADQEKAKKRKSTPKRGKSGESSDTPAKRKRQTKKRDLPSDTEEGKDEGDADSEGTNDPHEEDDAAPEEESDHEKTDTDDEKDEVEVEKPSKKKSSSKKTVEESSGSKGKDKQPSAKGSARSGEKSSKQIAKSTSSPAKKQKVDHVESSKEKSKKQPSKPQAKGSKEKGKATKKGKAKAEPTRKEMLEVVSKILKEVDFNTATLSDILQKLSDHFGVELSHRKPEVKDVITEAINAMTDDEEEDEEEEAEAGSDKEKEEVKGEEEEEKAEAESDKEKEKEEPKD.

Composition is skewed to basic and acidic residues over residues 1–47 (MATE…AEEE) and 57–68 (AKEGELGEKDKE). Positions 1–130 (MATETLDEKT…PSKSVSIEKG (130 aa)) are disordered. Positions 41 to 61 (IGEAEEEKKEDEEEGEAKEGE) form a coiled coil. Acidic residues predominate over residues 69-82 (DDVESEEEEEEEEG). Composition is skewed to basic and acidic residues over residues 83-93 (SGSKKSSEKET) and 100-110 (RPTRERKKVER). Residues 185-205 (EKEEEKQRARIKEKIDKCVKE) are a coiled coil. The disordered stretch occupies residues 246-430 (IIADQEKAKK…GKAKAEPTRK (185 aa)). Over residues 253-263 (AKKRKSTPKRG) the composition is skewed to basic residues. A Nuclear localization signal 1 motif is present at residues 260–267 (PKRGKSGE). Acidic residues predominate over residues 286–332 (SDTEEGKDEGDADSEGTNDPHEEDDAAPEEESDHEKTDTDDEKDEVE). 2 consecutive short sequence motifs (nuclear localization signal) follow at residues 343–350 (SKKTVEES) and 384–391 (AKKQKVDH). Positions 374-384 (KQIAKSTSSPA) are enriched in polar residues. Residues 387–397 (QKVDHVESSKE) show a composition bias toward basic and acidic residues. A DEK-C domain is found at 426–481 (EPTRKEMLEVVSKILKEVDFNTATLSDILQKLSDHFGVELSHRKPEVKDVITEAIN). 2 consecutive DNA-binding regions follow at residues 444–458 (DFNT…QKLS) and 473–477 (KDVIT). The segment at 482-530 (AMTDDEEEDEEEEAEAGSDKEKEEVKGEEEEEKAEAESDKEKEKEEPKD) is disordered. Over residues 484-497 (TDDEEEDEEEEAEA) the composition is skewed to acidic residues. Residues 492 to 527 (EEEAEAGSDKEKEEVKGEEEEEKAEAESDKEKEKEE) are a coiled coil. Basic and acidic residues predominate over residues 516–530 (EAESDKEKEKEEPKD).

Found in a mRNA splicing-dependent exon junction complex (EJC). Binds specifically histones H3 and H4.

It is found in the nucleus. The protein resides in the nucleolus. Its function is as follows. Chromatin-associated protein which contributes to the modulation of chromatin structure (such as super-helical structure of DNA) and function. Binds to chromatin of protein-coding genes throughout the genome to regulate nucleosome occupancy and chromatin accessibility, and to modulate the expression of target genes. The protein is DEK domain-containing chromatin-associated protein 2 of Arabidopsis thaliana (Mouse-ear cress).